The chain runs to 120 residues: UPF0102 protein Daro_0503 (120 aa).

Residues 1 to 20 form a disordered region; sequence MQVKANDTTTARGREAEDRA.

This sequence belongs to the UPF0102 family.

The polypeptide is UPF0102 protein Daro_0503 (Dechloromonas aromatica (strain RCB)).